The following is a 238-amino-acid chain: Flagellar L-ring protein (238 aa).

An N-terminal signal peptide occupies residues 1–17 (MKRRLLAAGCAMLLLSG). The N-palmitoyl cysteine moiety is linked to residue C18. A lipid anchor (S-diacylglycerol cysteine) is attached at C18. Residues 22–50 (RQQPSPVPPVTQPQAYAEPEDTAANPGSL) are disordered.

This sequence belongs to the FlgH family. In terms of assembly, the basal body constitutes a major portion of the flagellar organelle and consists of four rings (L,P,S, and M) mounted on a central rod.

It is found in the cell outer membrane. Its subcellular location is the bacterial flagellum basal body. Assembles around the rod to form the L-ring and probably protects the motor/basal body from shearing forces during rotation. The polypeptide is Flagellar L-ring protein (Nitratidesulfovibrio vulgaris (strain DSM 19637 / Miyazaki F) (Desulfovibrio vulgaris)).